The sequence spans 312 residues: Homeobox-leucine zipper protein ATHB-5 (312 aa).

The interval 1 to 33 (MKRSRGSSDSLSGFLPIRHSTTDKQISPRPTTT) is disordered. A compositionally biased stretch (polar residues) spans 23 to 33 (DKQISPRPTTT). The segment at residues 69-128 (AAEKKRRLGVEQVKALEKNFEIDNKLEPERKVKLAQELGLQPRQVAIWFQNRRARWKTKQ) is a DNA-binding region (homeobox). The interval 129-164 (LERDYGVLKSNFDALKRNRDSLQRDNDSLLGQIKEL) is leucine-zipper.

Belongs to the HD-ZIP homeobox family. Class I subfamily. Interacts with DNA as homodimer. In terms of tissue distribution, widely expressed.

The protein localises to the nucleus. Functionally, probable transcription factor that acts as a positive regulator of ABA-responsiveness, mediating the inhibitory effect of ABA on growth during seedling establishment. Binds to the DNA sequence 5'-CAATNATTG-3'. The chain is Homeobox-leucine zipper protein ATHB-5 (ATHB-5) from Arabidopsis thaliana (Mouse-ear cress).